A 266-amino-acid polypeptide reads, in one-letter code: Glutamate racemase 1 (266 aa).

Substrate contacts are provided by residues 11-12 (DS) and 43-44 (YG). Residue cysteine 74 is the Proton donor/acceptor of the active site. Position 75–76 (75–76 (NT)) interacts with substrate. Cysteine 182 functions as the Proton donor/acceptor in the catalytic mechanism. 183 to 184 (TH) lines the substrate pocket.

This sequence belongs to the aspartate/glutamate racemases family.

The enzyme catalyses L-glutamate = D-glutamate. The protein operates within cell wall biogenesis; peptidoglycan biosynthesis. Provides the (R)-glutamate required for cell wall biosynthesis. The protein is Glutamate racemase 1 of Caldanaerobacter subterraneus subsp. tengcongensis (strain DSM 15242 / JCM 11007 / NBRC 100824 / MB4) (Thermoanaerobacter tengcongensis).